A 418-amino-acid polypeptide reads, in one-letter code: Tyrosine--tRNA ligase (418 aa).

L-tyrosine is bound at residue Tyr34. Residues 39–48 (PTADSLHLGH) carry the 'HIGH' region motif. Positions 169 and 173 each coordinate L-tyrosine. The 'KMSKS' region motif lies at 229–233 (KFGKS). Lys232 is a binding site for ATP. An S4 RNA-binding domain is found at 352–418 (HNIVELLVTA…GKKKYFVLTY (67 aa)).

It belongs to the class-I aminoacyl-tRNA synthetase family. TyrS type 1 subfamily. As to quaternary structure, homodimer.

Its subcellular location is the cytoplasm. The catalysed reaction is tRNA(Tyr) + L-tyrosine + ATP = L-tyrosyl-tRNA(Tyr) + AMP + diphosphate + H(+). Functionally, catalyzes the attachment of tyrosine to tRNA(Tyr) in a two-step reaction: tyrosine is first activated by ATP to form Tyr-AMP and then transferred to the acceptor end of tRNA(Tyr). The chain is Tyrosine--tRNA ligase from Streptococcus mutans serotype c (strain ATCC 700610 / UA159).